A 456-amino-acid polypeptide reads, in one-letter code: Bifunctional protein GlmU (456 aa).

The pyrophosphorylase stretch occupies residues 1 to 228; it reads MTLPLHVLIL…PQDVEGANDP (228 aa). Residues 10–13, Lys24, Gln76, 81–82, 103–105, Gly138, Glu153, Asn168, and Asn226 contribute to the UDP-N-acetyl-alpha-D-glucosamine site; these read LAAG, GT, and YGD. Residue Asp105 coordinates Mg(2+). A Mg(2+)-binding site is contributed by Asn226. Residues 229-249 are linker; that stretch reads WQLAQLERAWQLRAARTLCLQ. The segment at 250 to 456 is N-acetyltransferase; that stretch reads GVRMADPARV…GWKRPTKKSP (207 aa). UDP-N-acetyl-alpha-D-glucosamine is bound by residues Arg332 and Lys350. Residue His362 is the Proton acceptor of the active site. 2 residues coordinate UDP-N-acetyl-alpha-D-glucosamine: Tyr365 and Asn376. Residues Ala379, 385 to 386, Ser404, Ala422, and Arg439 each bind acetyl-CoA; that span reads NY.

It in the N-terminal section; belongs to the N-acetylglucosamine-1-phosphate uridyltransferase family. In the C-terminal section; belongs to the transferase hexapeptide repeat family. In terms of assembly, homotrimer. Mg(2+) serves as cofactor.

The protein localises to the cytoplasm. It catalyses the reaction alpha-D-glucosamine 1-phosphate + acetyl-CoA = N-acetyl-alpha-D-glucosamine 1-phosphate + CoA + H(+). It carries out the reaction N-acetyl-alpha-D-glucosamine 1-phosphate + UTP + H(+) = UDP-N-acetyl-alpha-D-glucosamine + diphosphate. Its pathway is nucleotide-sugar biosynthesis; UDP-N-acetyl-alpha-D-glucosamine biosynthesis; N-acetyl-alpha-D-glucosamine 1-phosphate from alpha-D-glucosamine 6-phosphate (route II): step 2/2. The protein operates within nucleotide-sugar biosynthesis; UDP-N-acetyl-alpha-D-glucosamine biosynthesis; UDP-N-acetyl-alpha-D-glucosamine from N-acetyl-alpha-D-glucosamine 1-phosphate: step 1/1. It participates in bacterial outer membrane biogenesis; LPS lipid A biosynthesis. Functionally, catalyzes the last two sequential reactions in the de novo biosynthetic pathway for UDP-N-acetylglucosamine (UDP-GlcNAc). The C-terminal domain catalyzes the transfer of acetyl group from acetyl coenzyme A to glucosamine-1-phosphate (GlcN-1-P) to produce N-acetylglucosamine-1-phosphate (GlcNAc-1-P), which is converted into UDP-GlcNAc by the transfer of uridine 5-monophosphate (from uridine 5-triphosphate), a reaction catalyzed by the N-terminal domain. In Xanthomonas axonopodis pv. citri (strain 306), this protein is Bifunctional protein GlmU.